Reading from the N-terminus, the 93-residue chain is Serine rich endogenous peptide 6 (93 aa).

Residues 1–27 form the signal peptide; the sequence is MGTKCYSKLRYVVVLVLLLFVFPCSLS. 2 short sequence motifs (SCOOP motif) span residues 48–62 and 73–87; these read GIIA…APNI and ISEA…GGGR. Residues 52–93 form a disordered region; the sequence is GSSPSGQAPNINNNYHGRRLMISEARPSKSKKGGGREPESPG. Positions 53 to 66 are enriched in polar residues; sequence SSPSGQAPNINNNY. 2 short sequence motifs (sxS motif essential for MIK2 binding) span residues 54 to 56 and 79 to 81; these read SPS and SKS.

It belongs to the serine rich endogenous peptide (SCOOP) phytocytokine family. As to quaternary structure, interacts with MIK2 (via extracellular leucine-rich repeat domain); this interaction triggers the formation of complex between MIK2 and the BAK1/SERK3 and SERK4 coreceptors, and subsequent BAK1 activation by phosphorylation. In terms of tissue distribution, mostly expressed in seedlings shoots, and, to a lower extent, in roots.

Its subcellular location is the cell membrane. It is found in the secreted. It localises to the extracellular space. The protein resides in the apoplast. Functionally, brassicaceae-specific phytocytokine (plant endogenous peptide released into the apoplast) perceived by MIK2 in a BAK1/SERK3 and SERK4 coreceptors-dependent manner, that modulates various physiological and antimicrobial processes including growth prevention and reactive oxygen species (ROS) response regulation. Inhibits root growth. This chain is Serine rich endogenous peptide 6, found in Arabidopsis thaliana (Mouse-ear cress).